Consider the following 147-residue polypeptide: MFLNGNCLETLKKKEPEGGRRRLSHPGNMGWMRPSQETTPPDRSHHSGFGLFCGDPGPEIEPFSLWVFPQEMVLEIHQLFMDHEYPCHHITSHCTWVAAHWTTSQSCAAWQGCRRACCSTWWKSPAQCTRPTVMSATFETAQEPGPS.

The segment at lysine 14–serine 47 is disordered.

This is Putative protein CLUHP3 (CLUHP3) from Homo sapiens (Human).